Reading from the N-terminus, the 385-residue chain is Succinate--CoA ligase [ADP-forming] subunit beta (385 aa).

One can recognise an ATP-grasp domain in the interval 9-241 (KELLRDFGIN…IDEEEPSELE (233 aa)). Residues K46, 53 to 55 (GRG), E99, T102, and E107 contribute to the ATP site. Positions 196 and 210 each coordinate Mg(2+). Substrate-binding positions include N261 and 318-320 (GIV).

Belongs to the succinate/malate CoA ligase beta subunit family. In terms of assembly, heterotetramer of two alpha and two beta subunits. Requires Mg(2+) as cofactor.

It carries out the reaction succinate + ATP + CoA = succinyl-CoA + ADP + phosphate. The catalysed reaction is GTP + succinate + CoA = succinyl-CoA + GDP + phosphate. It functions in the pathway carbohydrate metabolism; tricarboxylic acid cycle; succinate from succinyl-CoA (ligase route): step 1/1. Functionally, succinyl-CoA synthetase functions in the citric acid cycle (TCA), coupling the hydrolysis of succinyl-CoA to the synthesis of either ATP or GTP and thus represents the only step of substrate-level phosphorylation in the TCA. The beta subunit provides nucleotide specificity of the enzyme and binds the substrate succinate, while the binding sites for coenzyme A and phosphate are found in the alpha subunit. This is Succinate--CoA ligase [ADP-forming] subunit beta from Campylobacter fetus subsp. fetus (strain 82-40).